The chain runs to 641 residues: Serine/threonine-protein kinase PK-1 (641 aa).

One can recognise a Protein kinase domain in the interval 18 to 280; it reads YRVDARIAVG…ARARDARARL (263 aa). ATP is bound by residues 24–32 and Lys-47; that span reads IAVGGMATV. The Proton acceptor role is filled by Asp-141. The interval 317-347 is disordered; the sequence is LPVNEEDEGADAAHRTSRFRSPPPLPPRGRT. PASTA domains are found at residues 375-441, 442-508, 509-576, and 577-641; these read SGQF…TLSK, GPRT…LTVS, KGAP…TLSK, and GPEM…IEIR. The disordered stretch occupies residues 469-494; it reads KPGMSTREFSDSVPAGSVISTEPGKG.

It belongs to the protein kinase superfamily. Ser/Thr protein kinase family. Post-translationally, autophosphorylated on threonine residue(s).

The catalysed reaction is L-seryl-[protein] + ATP = O-phospho-L-seryl-[protein] + ADP + H(+). It catalyses the reaction L-threonyl-[protein] + ATP = O-phospho-L-threonyl-[protein] + ADP + H(+). This chain is Serine/threonine-protein kinase PK-1 (spk1), found in Streptomyces toyocaensis.